A 289-amino-acid polypeptide reads, in one-letter code: 3-methyl-2-oxobutanoate hydroxymethyltransferase (289 aa).

Mg(2+) is bound by residues aspartate 50 and aspartate 89. 3-methyl-2-oxobutanoate contacts are provided by residues 50-51 (DS), aspartate 89, and lysine 119. Glutamate 121 contacts Mg(2+). Glutamate 188 serves as the catalytic Proton acceptor. Positions 266 to 289 (AQHSFGMPEDEQRRWEENVSGADD) are disordered.

This sequence belongs to the PanB family. In terms of assembly, homodecamer; pentamer of dimers. Mg(2+) serves as cofactor.

It localises to the cytoplasm. It catalyses the reaction 3-methyl-2-oxobutanoate + (6R)-5,10-methylene-5,6,7,8-tetrahydrofolate + H2O = 2-dehydropantoate + (6S)-5,6,7,8-tetrahydrofolate. It participates in cofactor biosynthesis; (R)-pantothenate biosynthesis; (R)-pantoate from 3-methyl-2-oxobutanoate: step 1/2. Catalyzes the reversible reaction in which hydroxymethyl group from 5,10-methylenetetrahydrofolate is transferred onto alpha-ketoisovalerate to form ketopantoate. This is 3-methyl-2-oxobutanoate hydroxymethyltransferase from Oleidesulfovibrio alaskensis (strain ATCC BAA-1058 / DSM 17464 / G20) (Desulfovibrio alaskensis).